The primary structure comprises 48 residues: Delta-stichotoxin-Hmg4a (48 aa).

Intrachain disulfides connect cysteine 3/cysteine 43, cysteine 5/cysteine 33, and cysteine 26/cysteine 44.

The protein belongs to the sea anemone sodium channel inhibitory toxin family. Type II subfamily.

It localises to the secreted. Its subcellular location is the nematocyst. Its function is as follows. Binds specifically to voltage-gated sodium channels (Nav), thereby delaying their inactivation during signal transduction. Its toxicity is weaker than that of RpIII (AC P08380). This is Delta-stichotoxin-Hmg4a from Heteractis magnifica (Magnificent sea anemone).